The following is a 1899-amino-acid chain: MILKSFILGNLVSLCMKIINSAVVVGLYYGFLTTFSIGPSYLFLLRARVMEEGTEKEVSATTGFITGQLMMFISIYYVPLHLALVRPHTITVLVLPYLLFHFFWNNHKNFFDYGYTTRNSMRNLSIQCLFLNNLIVQFLNLFILPSSTLSRLVNISLFRCNNKMLFVTSSFVGWLIGHILFMKLVGLVLVCIRQNLATRSNRLLHSNMYLVSEFRNWTARIFSTLLFITCMYYLGVHRVKLPILTNRLKKTSEIAEQKKSKEETDEEIEKTFETKETKKEQQEFTDKVHSLYFEEQEDPIEEQGYPYKRNETKEKRLGKEKTKDEFHKNIPKYETLDLDRNQEKKLELTILKQKTNLVWFEKPLVTLLFDVKRWDRPLRHIKNSRFENTIKQEMAQYFFHTCTSDGKQKISFTYPPSLSTFFEMMQRKISLCTIEKQSPENMYNHWLYTNEQKRHNLSNEFLNRIEILDKGSSALDVLEQKNRLSNDENKQECLPKMYDPFLSGPSRGRIKKGYSTRRIMNDSSASTKGKKVWINKIHGIFPIDYVQLEHKIDTFLDESLSGESGTSFPGESAPLKGLSLSTDKKRIDSENQEKSLKFLFDVVTTNPNTQTRDKESILIREIHKRVPQWSYKLIRDLEEEEKETEEEPKQVFGIRLRKGKRVVIYTDTNDKTNTDTSTSTPSNPAEEIALIRYSHQPDFRRNLIKGSIRSQRRKTVVWELFQTNLHSPLFLDRIDKTFSFDIYRIMDLFFRSWMWKEPELKTSKSESEVEEKEEKVKKQKEKKDENERIAIAEAWDTFIVTQAVRGLMLVTQSIFRKYIVLPSLIIVKNIGRMLLFQFPEWSEDFKDWKREMHVKCTYNGVQLSETEFPKHWLTDGIQIKILFPFCLKPWHESKLRSHHITHEHEMDAMKKKGKEQNFCFLTVWGMEAELPFGYARKRPSFFEPIFKELTKKIQKVKKICFLVLRTFKEGAKGLVKVLKEKASWVIKIVLFIKKKIKELAKIFFFGFGLREVEVEVYESNENGKDSITNNNIINELPIRIRSVNWTNDSLTEKKIKDLADRTTTIQNEIERIKKEKKILFMTPDKNVSPNKLSCNDKRSESQKFFWQISKRKGARLIRKWHYFFKSFIERIYIGIFLCTIYIPKINAKLFLESKKNLQKFFDKSIYNNETNPDGIDETNKNAVHFISTLKKALFNISDKNSSISCDLSYLSQAYVFYKLSQTQVINKYDLRYVFQYQGAHSFLKDRIKDYLQTRGIFHSESRQNPFRNSEINDWKNWLRGHYQYNLSQTRWSRLVPQQWKNRVNQRHRIQKKDSQKWHSYEQDQLIHYKTKKNYAVHSLPMQKEKLKKHYRYDLLSHKYLNFEDRNNSYIYGSPLQVNGDREITYNYKTHKSKSFCTLGGLTISDYLKEEYLIDTDKNSDRKYFDLGIIYFSLRKNIDIKAWIDKNIGTNTNININKKIKTGNTFYQISDKKNLFDLTISQQRNSSNQKTKKTKKFGFLDWMGMNKQMLDHSISNFEPSWFLPEFCLLYDAYKVKPWIMPTKLLLLNLDTNENIRNQNENIRKSNKINGNKKQDFRISSNPKDYLELDNGTPKEKEKQGKVKGNLGSNQKTRENLGLDLRNQQKNVENDYVGSDIKKRRKKKQFNNNKETELDSILTNYLVFQLRWNPFLNKGIMKNIKVDCLLLRLINPKEIAIDSIQSGEMHLDLMSIQRDPSLTKLIKDGIFVIEPRRLSIKRDGQFIKYQTIGISLVHKRKYQTNRGYPENKYIDENDFYGSISQHGKMFVNGDENHYDLIVPENILSTRRRRELRIRNCLNSGNTENRNPVFFDSTNVRNCGKFLDEDKYLDTDIQKLIKFKLFLWPNFRLEDLACINRYWFDTNNGSRFSMLRIHMYPRFIVS.

The next 6 helical transmembrane spans lie at 23-43 (VVVG…SYLF), 64-84 (FITG…HLAL), 87-107 (PHTI…WNNH), 124-144 (LSIQ…LFIL), 172-192 (VGWL…LVCI), and 217-237 (WTAR…LGVH). 2 disordered regions span residues 256–280 (EQKK…TKKE) and 1581–1619 (PKDY…GLDL). The span at 269 to 280 (EKTFETKETKKE) shows a compositional bias: basic and acidic residues.

Belongs to the TIC214 family. In terms of assembly, part of the Tic complex.

Its subcellular location is the plastid. It is found in the chloroplast inner membrane. Functionally, involved in protein precursor import into chloroplasts. May be part of an intermediate translocation complex acting as a protein-conducting channel at the inner envelope. This chain is Protein TIC 214, found in Ceratophyllum demersum (Rigid hornwort).